Reading from the N-terminus, the 315-residue chain is Outer membrane protease OmpP (315 aa).

An N-terminal signal peptide occupies residues 1-23 (MQTKLLAIMLAAPVVFSSQEASA). Residues D103, D105, D230, and H232 contribute to the active site.

It belongs to the peptidase A26 family.

The protein localises to the cell outer membrane. Functionally, protease; also acts as a receptor for bacteriophage Ox2. The sequence is that of Outer membrane protease OmpP (ompP) from Escherichia coli (strain K12).